Reading from the N-terminus, the 154-residue chain is Deoxyuridine 5'-triphosphate nucleotidohydrolase (154 aa).

Substrate contacts are provided by residues Arg-64 to Gly-66, Asn-77, Thr-81 to Asp-83, and Lys-91.

The protein belongs to the dUTPase family. As to quaternary structure, homotrimer. Mg(2+) serves as cofactor.

The catalysed reaction is dUTP + H2O = dUMP + diphosphate + H(+). The protein operates within pyrimidine metabolism; dUMP biosynthesis; dUMP from dCTP (dUTP route): step 2/2. In terms of biological role, this enzyme is involved in nucleotide metabolism: it produces dUMP, the immediate precursor of thymidine nucleotides and it decreases the intracellular concentration of dUTP so that uracil cannot be incorporated into DNA. The protein is Deoxyuridine 5'-triphosphate nucleotidohydrolase of Mycobacterium sp. (strain JLS).